The chain runs to 194 residues: Pyridoxal 5'-phosphate synthase subunit PdxT (194 aa).

50–52 (GES) serves as a coordination point for L-glutamine. Residue Cys82 is the Nucleophile of the active site. L-glutamine is bound by residues Arg109 and 136–137 (IR). Residues His172 and Glu174 each act as charge relay system in the active site.

Belongs to the glutaminase PdxT/SNO family. As to quaternary structure, in the presence of PdxS, forms a dodecamer of heterodimers. Only shows activity in the heterodimer.

The enzyme catalyses aldehydo-D-ribose 5-phosphate + D-glyceraldehyde 3-phosphate + L-glutamine = pyridoxal 5'-phosphate + L-glutamate + phosphate + 3 H2O + H(+). It catalyses the reaction L-glutamine + H2O = L-glutamate + NH4(+). It participates in cofactor biosynthesis; pyridoxal 5'-phosphate biosynthesis. In terms of biological role, catalyzes the hydrolysis of glutamine to glutamate and ammonia as part of the biosynthesis of pyridoxal 5'-phosphate. The resulting ammonia molecule is channeled to the active site of PdxS. This chain is Pyridoxal 5'-phosphate synthase subunit PdxT, found in Streptococcus pneumoniae (strain CGSP14).